Consider the following 203-residue polypeptide: Recombination protein RecR (203 aa).

A C4-type zinc finger spans residues 58-73 (CDYCGNLDVVSICNIC). The Toprim domain maps to 81–177 (SIIAIVESVA…KISKLASGIP (97 aa)).

The protein belongs to the RecR family.

Its function is as follows. May play a role in DNA repair. It seems to be involved in an RecBC-independent recombinational process of DNA repair. It may act with RecF and RecO. This Orientia tsutsugamushi (strain Boryong) (Rickettsia tsutsugamushi) protein is Recombination protein RecR.